Reading from the N-terminus, the 339-residue chain is Outer membrane protein assembly factor BamC (339 aa).

The first 19 residues, 1 to 19 (MKFSRQLVLGSLAVLVLSA), serve as a signal peptide directing secretion. Residue C20 is the site of N-palmitoyl cysteine attachment. C20 is lipidated: S-diacylglycerol cysteine.

The protein belongs to the BamC family. As to quaternary structure, part of the Bam complex.

It is found in the cell outer membrane. Part of the outer membrane protein assembly complex, which is involved in assembly and insertion of beta-barrel proteins into the outer membrane. This chain is Outer membrane protein assembly factor BamC, found in Vibrio cholerae serotype O1 (strain ATCC 39315 / El Tor Inaba N16961).